Here is a 370-residue protein sequence, read N- to C-terminus: DNA replication and repair protein RecF (370 aa).

30 to 37 (GENAQGKT) provides a ligand contact to ATP.

This sequence belongs to the RecF family.

It is found in the cytoplasm. Functionally, the RecF protein is involved in DNA metabolism; it is required for DNA replication and normal SOS inducibility. RecF binds preferentially to single-stranded, linear DNA. It also seems to bind ATP. This chain is DNA replication and repair protein RecF, found in Staphylococcus aureus (strain USA300).